A 342-amino-acid polypeptide reads, in one-letter code: uncharacterized protein (342 aa).

The protein belongs to the proline racemase family.

This is an uncharacterized protein from Brucella canis (strain ATCC 23365 / NCTC 10854 / RM-666).